Consider the following 363-residue polypeptide: tRNA/tmRNA (uracil-C(5))-methyltransferase (363 aa).

Residues Q187, Y215, N220, E236, and D296 each coordinate S-adenosyl-L-methionine. The active-site Nucleophile is the C321. E355 acts as the Proton acceptor in catalysis.

It belongs to the class I-like SAM-binding methyltransferase superfamily. RNA M5U methyltransferase family. TrmA subfamily.

The enzyme catalyses uridine(54) in tRNA + S-adenosyl-L-methionine = 5-methyluridine(54) in tRNA + S-adenosyl-L-homocysteine + H(+). It catalyses the reaction uridine(341) in tmRNA + S-adenosyl-L-methionine = 5-methyluridine(341) in tmRNA + S-adenosyl-L-homocysteine + H(+). Functionally, dual-specificity methyltransferase that catalyzes the formation of 5-methyluridine at position 54 (m5U54) in all tRNAs, and that of position 341 (m5U341) in tmRNA (transfer-mRNA). The sequence is that of tRNA/tmRNA (uracil-C(5))-methyltransferase from Haemophilus influenzae (strain PittEE).